Consider the following 177-residue polypeptide: Ribonuclease M5 (177 aa).

Residues 5–99 (KQIIIVEGKT…NKTSKKIGIA (95 aa)) form the Toprim domain. Residues glutamate 11, aspartate 59, and aspartate 61 each contribute to the Mg(2+) site.

It belongs to the ribonuclease M5 family. Mg(2+) is required as a cofactor.

It localises to the cytoplasm. The enzyme catalyses Endonucleolytic cleavage of RNA, removing 21 and 42 nucleotides, respectively, from the 5'- and 3'-termini of a 5S-rRNA precursor.. Functionally, required for correct processing of both the 5' and 3' ends of 5S rRNA precursor. Cleaves both sides of a double-stranded region yielding mature 5S rRNA in one step. The polypeptide is Ribonuclease M5 (Mycoplasma mycoides subsp. mycoides SC (strain CCUG 32753 / NCTC 10114 / PG1)).